The sequence spans 1321 residues: C-Jun-amino-terminal kinase-interacting protein 4 (1321 aa).

N-acetylmethionine is present on Met-1. The region spanning 7 to 95 is the RH1 domain; sequence VVYQEEPGGS…ITQYEREKAL (89 aa). A coiled-coil region spans residues 66 to 166; sequence AQDQEHQVEL…NALHQRHTEM (101 aa). 5 positions are modified to phosphoserine: Ser-109, Ser-183, Ser-185, Ser-194, and Ser-203. A disordered region spans residues 203–292; sequence SLGIFPLPAG…SDVATIPTDT (90 aa). Position 217 is a phosphothreonine (Thr-217). Over residues 236-253 the composition is skewed to polar residues; the sequence is ELSQPRSHTSLKVSNSPE. 5 positions are modified to phosphoserine: Ser-238, Ser-251, Ser-265, Ser-268, and Ser-272. The span at 266–285 shows a compositional bias: polar residues; it reads DVSQGGSKATTPASTANSDV. Position 292 is a phosphothreonine (Thr-292). Residues Ser-311, Ser-329, Ser-332, and Ser-347 each carry the phosphoserine modification. Thr-348, Thr-365, and Thr-418 each carry phosphothreonine. Positions 408 to 534 form a coiled coil; it reads REVENLILEN…LQEAVRWTEM (127 aa). Residues 473–489 show a composition bias toward basic and acidic residues; it reads LRKARAEAEDARQKAKD. Disordered stretches follow at residues 473-500 and 563-600; these read LRKARAEAEDARQKAKDDDDSDIPTAQR and SSNTTKKPEPPVNLKYNAPTSHVTPSVKKRSSTLSQLP. An RH2 domain is found at 500–571; the sequence is RKRFTRVEMA…SSSNTTKKPE (72 aa). At Thr-586 the chain carries Phosphothreonine. At Ser-588 the chain carries Phosphoserine. Position 595 is a phosphothreonine (Thr-595). Residues Ser-705, Ser-728, Ser-730, Ser-732, and Ser-733 each carry the phosphoserine modification. Positions 724–758 form a coiled coil; the sequence is SKQRSASQSSLDKLDQELKEQQKELKNQEELSSLV. A disordered region spans residues 854–906; sequence GAATSPSTNGASPVMDKPPEMEAENSEVDENVPTAEEATEATEGNAGSAEDTV. The segment covering 855-864 has biased composition (polar residues); sequence AATSPSTNGA. The span at 874 to 883 shows a compositional bias: acidic residues; it reads MEAENSEVDE. A compositionally biased stretch (low complexity) spans 894-903; the sequence is ATEGNAGSAE. A Phosphoserine modification is found at Ser-1188. Residues 1239 to 1266 are disordered; that stretch reads PQSSSSGTDLTGDKAGPSAQEPGSQTPL. At Thr-1264 the chain carries Phosphothreonine.

This sequence belongs to the JIP scaffold family. As to quaternary structure, homodimer. The homodimer interacts with ARF6, forming a heterotetramer. Homooligomer. Interacts with MAX, MAPK14, MAP3K3, MYC, KNS2 and MAP2K4. Interaction with KNS2 is important in the formation of ternary complex with MAPK8. Interacts with NFKB1. Interacts with PIP4P1. Interacts with PIKFYVE. Interacts with MAPK8, MAPK9, MAPK10. Phosphorylated by MAPK8 and MAPK14. In terms of tissue distribution, expressed only in testis on the round spermatids of stage I, II and II. Absent in spermatogonia and spermatocyte. As to expression, expressed in testis and in acute myeloid leukemia (AML) patients. Expressed in testis.

Its subcellular location is the cytoplasm. The protein resides in the perinuclear region. The protein localises to the lysosome membrane. It localises to the cytoplasmic vesicle. It is found in the secretory vesicle. Its subcellular location is the acrosome. May play a role in spermatozoa-egg-interaction. Functionally, the JNK-interacting protein (JIP) group of scaffold proteins selectively mediates JNK signaling by aggregating specific components of the MAPK cascade to form a functional JNK signaling module. Regulates lysosomal positioning by acting as an adapter protein which links PIP4P1-positive lysosomes to the dynein-dynactin complex. Assists PIKFYVE selective functionality in microtubule-based endosome-to-TGN trafficking. The polypeptide is C-Jun-amino-terminal kinase-interacting protein 4 (Homo sapiens (Human)).